The sequence spans 97 residues: Aspartyl/glutamyl-tRNA(Asn/Gln) amidotransferase subunit C (97 aa).

This sequence belongs to the GatC family. In terms of assembly, heterotrimer of A, B and C subunits.

The enzyme catalyses L-glutamyl-tRNA(Gln) + L-glutamine + ATP + H2O = L-glutaminyl-tRNA(Gln) + L-glutamate + ADP + phosphate + H(+). The catalysed reaction is L-aspartyl-tRNA(Asn) + L-glutamine + ATP + H2O = L-asparaginyl-tRNA(Asn) + L-glutamate + ADP + phosphate + 2 H(+). In terms of biological role, allows the formation of correctly charged Asn-tRNA(Asn) or Gln-tRNA(Gln) through the transamidation of misacylated Asp-tRNA(Asn) or Glu-tRNA(Gln) in organisms which lack either or both of asparaginyl-tRNA or glutaminyl-tRNA synthetases. The reaction takes place in the presence of glutamine and ATP through an activated phospho-Asp-tRNA(Asn) or phospho-Glu-tRNA(Gln). This Cyanothece sp. (strain PCC 7425 / ATCC 29141) protein is Aspartyl/glutamyl-tRNA(Asn/Gln) amidotransferase subunit C.